The primary structure comprises 491 residues: Protein nucleotidyltransferase YdiU (491 aa).

ATP contacts are provided by Gly-88, Gly-90, Arg-91, Lys-111, Asp-123, Gly-124, Arg-174, and Arg-181. The active-site Proton acceptor is Asp-250. Mg(2+)-binding residues include Asn-251 and Asp-260. Residue Asp-260 participates in ATP binding. A compositionally biased stretch (basic and acidic residues) spans 466-484; sequence DDQPDRADYAEPPQPEERV. The disordered stretch occupies residues 466–491; it reads DDQPDRADYAEPPQPEERVLQTFCGT.

The protein belongs to the SELO family. Mg(2+) is required as a cofactor. Mn(2+) serves as cofactor.

It catalyses the reaction L-seryl-[protein] + ATP = 3-O-(5'-adenylyl)-L-seryl-[protein] + diphosphate. It carries out the reaction L-threonyl-[protein] + ATP = 3-O-(5'-adenylyl)-L-threonyl-[protein] + diphosphate. The enzyme catalyses L-tyrosyl-[protein] + ATP = O-(5'-adenylyl)-L-tyrosyl-[protein] + diphosphate. The catalysed reaction is L-histidyl-[protein] + UTP = N(tele)-(5'-uridylyl)-L-histidyl-[protein] + diphosphate. It catalyses the reaction L-seryl-[protein] + UTP = O-(5'-uridylyl)-L-seryl-[protein] + diphosphate. It carries out the reaction L-tyrosyl-[protein] + UTP = O-(5'-uridylyl)-L-tyrosyl-[protein] + diphosphate. Its function is as follows. Nucleotidyltransferase involved in the post-translational modification of proteins. It can catalyze the addition of adenosine monophosphate (AMP) or uridine monophosphate (UMP) to a protein, resulting in modifications known as AMPylation and UMPylation. The protein is Protein nucleotidyltransferase YdiU of Bradyrhizobium sp. (strain ORS 278).